The following is a 129-amino-acid chain: MAKAPIRARKRVRKQVSDGVAHIHASFNNTIVTITDRQGNALGWATAGGSGFRGSRKSTPFAAQVAAERCAEAVKEYGIKNLEVMVKGPGPGRESTIRALNAAGFRITNITDVTPIPHNGCRPPKKRRV.

The protein belongs to the universal ribosomal protein uS11 family. In terms of assembly, part of the 30S ribosomal subunit. Interacts with proteins S7 and S18. Binds to IF-3.

Functionally, located on the platform of the 30S subunit, it bridges several disparate RNA helices of the 16S rRNA. Forms part of the Shine-Dalgarno cleft in the 70S ribosome. In Pectobacterium atrosepticum (strain SCRI 1043 / ATCC BAA-672) (Erwinia carotovora subsp. atroseptica), this protein is Small ribosomal subunit protein uS11.